Consider the following 206-residue polypeptide: Probable glutathione S-transferase 9 (206 aa).

In terms of domain architecture, GST N-terminal spans 2 to 79; that stretch reads VSYKLIYFQS…YLSKQFGISG (78 aa). Glutathione-binding positions include Y8, W39, K43, 49 to 51, and 63 to 64; these read GQV and QS. The GST C-terminal domain occupies 81-206; it reads SSWEEAQVDA…WIEKRPVTSR (126 aa).

Belongs to the GST superfamily. Sigma family.

It catalyses the reaction RX + glutathione = an S-substituted glutathione + a halide anion + H(+). In terms of biological role, conjugation of reduced glutathione to a wide number of exogenous and endogenous hydrophobic electrophiles. The polypeptide is Probable glutathione S-transferase 9 (gst-9) (Caenorhabditis elegans).